A 473-amino-acid chain; its full sequence is Putative sulfoquinovose importer (473 aa).

Transmembrane regions (helical) follow at residues 18 to 38 (AYGVGDFGSNLMLCIGTLYLL), 45 to 65 (LGMPAYYGGIIFLVAKFFTAF), 88 to 108 (PFILYASFPVALVATAQFFAT), 110 to 130 (FTLPVKTAFATVLFMLFGLFY), 160 to 180 (GGATIGLLLCTVGFMPIQALF), 187 to 207 (GYLIAAVIFSVCGLFSMWWCF), 239 to 259 (LLVLCVANLCTLAAFNIKLAI), 276 to 296 (WMGFFSMGCILIGVLLVPAAV), 317 to 337 (ILNFIWGGTSFLFVIFSCIAF), 380 to 400 (ISAALAGFLPGIMLTQIGYIP), and 415 to 435 (LIFLWPCGLAIIAALTMGFFY).

Belongs to the sodium:galactoside symporter (TC 2.A.2) family.

It is found in the cell inner membrane. Could be involved in sulfoquinovose import. This is Putative sulfoquinovose importer (yihO) from Salmonella typhimurium (strain LT2 / SGSC1412 / ATCC 700720).